The sequence spans 454 residues: Butyrophilin-like protein 2 (454 aa).

The Cytoplasmic segment spans residues 1 to 6; that stretch reads MVDCPR. A helical; Signal-anchor for type II membrane protein membrane pass occupies residues 7 to 23; that stretch reads YSLSGVAASFLFVLLTI. The Extracellular segment spans residues 24–454; it reads KHPDDFRVVG…KTARFPLSGW (431 aa). Ig-like V-type domains lie at 27-140, 148-234, 244-355, and 365-452; these read DDFR…VLLQ, PNIH…ATIA, ASVS…ARVD, and PRIT…FPLS. Intrachain disulfides connect Cys50/Cys124, Cys164/Cys218, Cys267/Cys341, and Cys381/Cys435. N-linked (GlcNAc...) asparagine glycosylation is found at Asn210, Asn296, Asn427, and Asn432.

Belongs to the immunoglobulin superfamily. BTN/MOG family. As to expression, highly expressed in intestine and at reduced levels in lung and stomach. Also expressed in thymus, spleen, lymph nodes, T-cells, B-cells, and macrophages.

The protein resides in the membrane. In terms of biological role, negative regulator of T-cell proliferation. The protein is Butyrophilin-like protein 2 of Mus musculus (Mouse).